We begin with the raw amino-acid sequence, 300 residues long: Protoheme IX farnesyltransferase 1 (300 aa).

Transmembrane regions (helical) follow at residues 28–48 (VVAL…PTIL), 54–74 (VAGL…NHLI), 100–120 (ALLF…VFTN), 122–142 (LTAW…TAYL), 149–169 (NIVI…TAVT), 176–196 (ALLL…ALAI), 222–242 (CILL…LVGM), 243–263 (SGPL…YKAW), and 280–300 (FSIY…YLWA).

The protein belongs to the UbiA prenyltransferase family. Protoheme IX farnesyltransferase subfamily.

Its subcellular location is the cell inner membrane. It catalyses the reaction heme b + (2E,6E)-farnesyl diphosphate + H2O = Fe(II)-heme o + diphosphate. It participates in porphyrin-containing compound metabolism; heme O biosynthesis; heme O from protoheme: step 1/1. Functionally, converts heme B (protoheme IX) to heme O by substitution of the vinyl group on carbon 2 of heme B porphyrin ring with a hydroxyethyl farnesyl side group. The sequence is that of Protoheme IX farnesyltransferase 1 from Shewanella sp. (strain MR-4).